A 63-amino-acid chain; its full sequence is Large ribosomal subunit protein bL32 (63 aa).

Belongs to the bacterial ribosomal protein bL32 family.

The sequence is that of Large ribosomal subunit protein bL32 from Lactobacillus delbrueckii subsp. bulgaricus (strain ATCC 11842 / DSM 20081 / BCRC 10696 / JCM 1002 / NBRC 13953 / NCIMB 11778 / NCTC 12712 / WDCM 00102 / Lb 14).